A 249-amino-acid polypeptide reads, in one-letter code: Cysteine-rich secretory protein 1 (249 aa).

The first 20 residues, 1–20, serve as a signal peptide directing secretion; sequence MEIKHLLFLVAAACLLPVLS. The 131-residue stretch at 45-175 folds into the SCP domain; the sequence is VNIHNTLRRG…SPRYFYVCHY (131 aa). Residue N104 is glycosylated (N-linked (GlcNAc...) asparagine). Disulfide bonds link C195–C202, C198–C207, C211–C244, C220–C238, and C229–C242. Residues 211–244 enclose the ShKT domain; it reads CIYYDEYTDCSLEVRFLGCNHSTPRMFCKATCLC. N-linked (GlcNAc...) asparagine glycosylation occurs at N230.

Belongs to the CRISP family. Expressed in all the regions of the epididymis except the caput and is not detected in the testis, prostate, seminal vesicle, and brain.

May have a role in sperm-egg fusion and maturation. The polypeptide is Cysteine-rich secretory protein 1 (CRISP1) (Macaca mulatta (Rhesus macaque)).